Here is a 488-residue protein sequence, read N- to C-terminus: Cobyric acid synthase (488 aa).

The GATase cobBQ-type domain occupies 248–435 (VLKVVVPVLP…LHGLFESPAA (188 aa)). Catalysis depends on cysteine 329, which acts as the Nucleophile. Residue histidine 427 is part of the active site.

It belongs to the CobB/CobQ family. CobQ subfamily.

Its pathway is cofactor biosynthesis; adenosylcobalamin biosynthesis. Catalyzes amidations at positions B, D, E, and G on adenosylcobyrinic A,C-diamide. NH(2) groups are provided by glutamine, and one molecule of ATP is hydrogenolyzed for each amidation. The protein is Cobyric acid synthase of Pseudomonas fluorescens (strain Pf0-1).